The chain runs to 248 residues: Neurovirulence factor ICP34.5 (248 aa).

Over residues 1 to 14 (MARRRRHRGPRRPR) the composition is skewed to basic residues. The required for nucleolar localization stretch occupies residues 1–16 (MARRRRHRGPRRPRPP). Disordered regions lie at residues 1–129 (MARR…FRLP) and 149–174 (RRAG…TPAT). Over residues 24 to 35 (TAQSQVTSTPNS) the composition is skewed to polar residues. Pro residues predominate over residues 45 to 58 (AAPPPPPAGGPPPS). Residues 73-83 (ASDDDDDDDWP) are compositionally biased toward acidic residues. 2 stretches are compositionally biased toward pro residues: residues 84-93 (DSPPPEPAPE) and 119-128 (SHPPSRPFRL). The Nuclear export signal motif lies at 128 to 137 (LPPRLALRLR). A run of 5 repeats spans residues 161–163 (ATP), 164–166 (ATP), 167–169 (ATP), 170–172 (ATP), and 173–175 (ATP). The segment at 161-175 (ATPATPATPATPATP) is 5 X 3 AA tandem repeats of A-T-P. Positions 164–174 (ATPATPATPAT) are enriched in low complexity. The segment at 175–188 (PARVRFSPHVRVRH) is binding to PP1CA. Residues 175 to 188 (PARVRFSPHVRVRH) are interaction with host PPP1CA. The tract at residues 190–248 (VVWASAARLARRGSWARERADRARFRRRVAEAEAVIGPCLGPEARARALARGAGPANSV) is important for interferon resistance. Residues 200 to 218 (RRGSWARERADRARFRRRV) carry the Bipartite nuclear localization signal motif. Residues 218-233 (VAEAEAVIGPCLGPEA) are interaction with host EIF2S1/EIF-2ALPHA.

This sequence belongs to the PPP1R15 family. Interacts with host PPP1CA; this interaction forms a high-molecular-weight complex that dephosphorylates EIF2S1/eIF-2alpha. Interacts with host EIF2S1/eIF-2alpha; this interaction is crucial for the specific dephosphorylation of EIF2S1/eIF-2alpha by PPP1CA. Binds to proliferating cell nuclear antigen (PCNA), which may release host cells from growth arrest and facilitate viral replication. Interacts (via N-terminus) with host C1QBP; this interaction allows C1QBP to be recruited to the inner nuclear membrane by ICP34.5. Interacts with host PRKCA. Interacts with protein UL31. Interacts with host STING/TMEM173; this interaction inhibits the intracellular DNA sensing pathway. Interacts with host BECN1; this interaction modulates host autophagy.

The protein localises to the host cytoplasm. The protein resides in the host nucleus. It is found in the host nucleolus. Its subcellular location is the virion. Functionally, inhibits the establishment of the immune response and of the integrated stress response (ISR) in the infected cell. Plays essential roles in viral nuclear egress to mediate capsid transit across the nuclear membrane. Facilitates nuclear egress cooperatively with host C1QBP and protein kinase C/PKC to induce lamin A/C phosphorylation and subsequent reorganization. In turn, lamina disassembles and nuclear egress occurs. Recruits the serine/threonine protein phosphatase PPP1CA/PP1-alpha to dephosphorylate the translation initiation factor EIF2S1/eIF-2alpha, thereby couteracting the host shutoff of protein synthesis involving double-stranded RNA-dependent protein kinase EIF2AK2/PKR. In turn, controls host IRF3 activation and subsequently inhibits host interferon response. Controls the DNA sensing pathway by interacting with and inhibiting host STING/TMEM173. Also down-modulates the host MHC class II proteins cell surface expression. Acts as a neurovirulence factor that has a profound effect on the growth of the virus in central nervous system tissue, by interacting with host BECN1 and thereby antagonizing the host autophagy response. The polypeptide is Neurovirulence factor ICP34.5 (ICP34.5) (Homo sapiens (Human)).